A 270-amino-acid polypeptide reads, in one-letter code: MISKINFVKMHGLGNDFVIVNKRDLSSSYDLSQLAKNMAERHTGIGCDQFIIYEEHNDFYEMIIYNIDGSSAKLCGNATRCLAKLIYLDTGKKDITVMVGNKKLLCNVNDENNISVNVGSVSFNEAWMPSRDKVWAFAERYMIDLKETICVDIGNPHLIIFSKLEPQDQKIVGEKLQAKELFADGVNVNFAEVKDNKIYLSVWERGAGLTLACGSGACGSFAAGLKLGFIHSPSTIVFKHGNLTMKEENGNIIMQGAATLVARGEYYCEQ.

Substrate contacts are provided by Asn15, Gln49, and Asn66. Residue Cys75 is the Proton donor of the active site. Substrate contacts are provided by residues 76 to 77 (GN), Asn155, Asn187, and 204 to 205 (ER). Cys213 functions as the Proton acceptor in the catalytic mechanism. 214 to 215 (GS) provides a ligand contact to substrate.

This sequence belongs to the diaminopimelate epimerase family. In terms of assembly, homodimer.

It is found in the cytoplasm. It catalyses the reaction (2S,6S)-2,6-diaminopimelate = meso-2,6-diaminopimelate. It participates in amino-acid biosynthesis; L-lysine biosynthesis via DAP pathway; DL-2,6-diaminopimelate from LL-2,6-diaminopimelate: step 1/1. Catalyzes the stereoinversion of LL-2,6-diaminopimelate (L,L-DAP) to meso-diaminopimelate (meso-DAP), a precursor of L-lysine and an essential component of the bacterial peptidoglycan. The polypeptide is Diaminopimelate epimerase (Rickettsia massiliae (strain Mtu5)).